The following is an 822-amino-acid chain: DNA gyrase subunit A (822 aa).

Residues 32–497 form the Topo IIA-type catalytic domain; the sequence is LPDVRDGLKP…QVLSLEDEDL (466 aa). Tyrosine 120 serves as the catalytic O-(5'-phospho-DNA)-tyrosine intermediate. A GyrA-box motif is present at residues 524 to 530; that stretch reads QKRGGRG.

This sequence belongs to the type II topoisomerase GyrA/ParC subunit family. As to quaternary structure, heterotetramer, composed of two GyrA and two GyrB chains. In the heterotetramer, GyrA contains the active site tyrosine that forms a transient covalent intermediate with DNA, while GyrB binds cofactors and catalyzes ATP hydrolysis.

The protein resides in the cytoplasm. The enzyme catalyses ATP-dependent breakage, passage and rejoining of double-stranded DNA.. In terms of biological role, a type II topoisomerase that negatively supercoils closed circular double-stranded (ds) DNA in an ATP-dependent manner to modulate DNA topology and maintain chromosomes in an underwound state. Negative supercoiling favors strand separation, and DNA replication, transcription, recombination and repair, all of which involve strand separation. Also able to catalyze the interconversion of other topological isomers of dsDNA rings, including catenanes and knotted rings. Type II topoisomerases break and join 2 DNA strands simultaneously in an ATP-dependent manner. The chain is DNA gyrase subunit A from Streptococcus pneumoniae (strain ATCC BAA-255 / R6).